The chain runs to 427 residues: Trigger factor (427 aa).

A PPIase FKBP-type domain is found at 163–248; that stretch reads GDTVILDFEG…LHEIKTKEVP (86 aa).

The protein belongs to the FKBP-type PPIase family. Tig subfamily.

The protein localises to the cytoplasm. It catalyses the reaction [protein]-peptidylproline (omega=180) = [protein]-peptidylproline (omega=0). Functionally, involved in protein export. Acts as a chaperone by maintaining the newly synthesized protein in an open conformation. Functions as a peptidyl-prolyl cis-trans isomerase. The sequence is that of Trigger factor from Listeria monocytogenes serotype 4a (strain HCC23).